The primary structure comprises 58 residues: Small ribosomal subunit protein bS21 (58 aa).

The interval 35-58 (REHYEKPSVKKKKKSEAARKRKFK) is disordered. The span at 43–58 (VKKKKKSEAARKRKFK) shows a compositional bias: basic residues.

This sequence belongs to the bacterial ribosomal protein bS21 family.

This is Small ribosomal subunit protein bS21 from Clostridium botulinum (strain Alaska E43 / Type E3).